We begin with the raw amino-acid sequence, 874 residues long: Cellulose synthase catalytic subunit [UDP-forming] (874 aa).

The next 4 helical transmembrane spans lie at 30-50 (SPFS…VFPL), 151-171 (ILGV…TQPF), 173-193 (PLSQ…VRRM), and 230-250 (LVCG…LVLG). Positions 271–364 (QWPTVDIFVP…FVAIFDCDHV (94 aa)) are catalytic subdomain A. The active site involves aspartate 313. Aspartate 360 and aspartate 362 together coordinate substrate. Residues 441 to 501 (KPLDEIGGIA…GQRIRWARGM (61 aa)) are catalytic subdomain B. The active site involves aspartate 457. 5 helical membrane-spanning segments follow: residues 525–545 (LNAM…TAPL), 547–567 (FLLL…LFVI), 592–612 (IYET…LINP), 634–654 (VISR…AAGV), and 668–688 (VIVS…AVAV). Positions 694 to 790 (QVRRAHRVEI…QHIDFVQCTF (97 aa)) constitute a PilZ domain. A helical transmembrane segment spans residues 833–853 (SVKVIFRSLTALIAWIVSFIP).

This sequence belongs to the glycosyltransferase 2 family. The cofactor is Mg(2+).

It is found in the cell inner membrane. The enzyme catalyses [(1-&gt;4)-beta-D-glucosyl](n) + UDP-alpha-D-glucose = [(1-&gt;4)-beta-D-glucosyl](n+1) + UDP + H(+). Its pathway is glycan metabolism; bacterial cellulose biosynthesis. Activated by bis-(3'-5') cyclic diguanylic acid (c-di-GMP). Its function is as follows. Catalytic subunit of cellulose synthase. It polymerizes uridine 5'-diphosphate glucose to cellulose, which is produced as an extracellular component for mechanical and chemical protection at the onset of the stationary phase, when the cells exhibit multicellular behavior (rdar morphotype). Coexpression of cellulose and thin aggregative fimbriae leads to a hydrophobic network with tightly packed cells embedded in a highly inert matrix. The sequence is that of Cellulose synthase catalytic subunit [UDP-forming] (bcsA) from Salmonella typhimurium (strain LT2 / SGSC1412 / ATCC 700720).